We begin with the raw amino-acid sequence, 431 residues long: Enolase (431 aa).

(2R)-2-phosphoglycerate is bound at residue Gln-163. Residue Glu-205 is the Proton donor of the active site. Mg(2+) contacts are provided by Asp-242, Glu-288, and Asp-315. Residues Lys-340, Arg-369, Ser-370, and Lys-391 each contribute to the (2R)-2-phosphoglycerate site. Lys-340 acts as the Proton acceptor in catalysis.

Belongs to the enolase family. It depends on Mg(2+) as a cofactor.

The protein localises to the cytoplasm. It localises to the secreted. The protein resides in the cell surface. The enzyme catalyses (2R)-2-phosphoglycerate = phosphoenolpyruvate + H2O. Its pathway is carbohydrate degradation; glycolysis; pyruvate from D-glyceraldehyde 3-phosphate: step 4/5. Functionally, catalyzes the reversible conversion of 2-phosphoglycerate (2-PG) into phosphoenolpyruvate (PEP). It is essential for the degradation of carbohydrates via glycolysis. This Bacillus cereus (strain AH187) protein is Enolase.